A 738-amino-acid chain; its full sequence is Protein Aster-B (738 aa).

A disordered region spans residues 1–81 (MKGFKLSCTA…SGGKNSKKSQ (81 aa)). Over residues 8–19 (CTASNSNRSTPA) the composition is skewed to polar residues. Phosphoserine occurs at positions 28 and 30. Residues 41 to 51 (MVEKGSDHSSD) are compositionally biased toward basic and acidic residues. The span at 59–70 (QGVQRSCSSQSG) shows a compositional bias: low complexity. The region spanning 96 to 163 (EDFRKLFKQL…KDICSMTKEK (68 aa)) is the GRAM domain. The tract at residues 254-301 (EENEVNDSSSKSSIETKPDASPQLPKKSITNSTLTSTGSSEAPVSFDG) is disordered. A compositionally biased stretch (polar residues) spans 259-268 (NDSSSKSSIE). Ser-274 carries the post-translational modification Phosphoserine. A compositionally biased stretch (polar residues) spans 281–295 (SITNSTLTSTGSSEA). Residues 372 to 543 (SGRQYVNEVF…ELAKTESTYL (172 aa)) enclose the VASt domain. At Tyr-389 the chain carries Phosphotyrosine. The tract at residues 544-566 (AEMHRQSPKEKASKTTTVRRRKR) is disordered. The span at 545 to 556 (EMHRQSPKEKAS) shows a compositional bias: basic and acidic residues. Phosphoserine is present on residues Ser-550 and Ser-581. Phosphothreonine occurs at positions 584, 585, and 587. The helical transmembrane segment at 623-643 (LLLVISCVICFSLVLLVILNM) threads the bilayer.

The protein localises to the endoplasmic reticulum membrane. The protein resides in the cell membrane. In terms of biological role, cholesterol transporter that mediates non-vesicular transport of cholesterol from the plasma membrane (PM) to the endoplasmic reticulum (ER). Contains unique domains for binding cholesterol and the PM, thereby serving as a molecular bridge for the transfer of cholesterol from the PM to the ER. Plays a crucial role in cholesterol homeostasis in the adrenal gland and has the unique ability to localize to the PM based on the level of membrane cholesterol. In lipid-poor conditions localizes to the ER membrane and in response to excess cholesterol in the PM is recruited to the endoplasmic reticulum-plasma membrane contact sites (EPCS) which is mediated by the GRAM domain. At the EPCS, the sterol-binding VASt/ASTER domain binds to the cholesterol in the PM and facilitates its transfer from the PM to ER. The sequence is that of Protein Aster-B (GRAMD1B) from Homo sapiens (Human).